Consider the following 200-residue polypeptide: Recombination protein RecR (200 aa).

Residues 58–75 (CPCCFCLKNFPESQCEFC) form a C4-type zinc finger. The Toprim domain occupies 82 to 177 (STLCIVASPK…SISRLALGLP (96 aa)).

The protein belongs to the RecR family.

Functionally, may play a role in DNA repair. It seems to be involved in an RecBC-independent recombinational process of DNA repair. It may act with RecF and RecO. The polypeptide is Recombination protein RecR (Chlamydia felis (strain Fe/C-56) (Chlamydophila felis)).